The chain runs to 175 residues: Large ribosomal subunit protein uL10 (175 aa).

Belongs to the universal ribosomal protein uL10 family. In terms of assembly, part of the ribosomal stalk of the 50S ribosomal subunit. The N-terminus interacts with L11 and the large rRNA to form the base of the stalk. The C-terminus forms an elongated spine to which L12 dimers bind in a sequential fashion forming a multimeric L10(L12)X complex.

Functionally, forms part of the ribosomal stalk, playing a central role in the interaction of the ribosome with GTP-bound translation factors. The chain is Large ribosomal subunit protein uL10 from Prochlorococcus marinus (strain MIT 9211).